A 681-amino-acid polypeptide reads, in one-letter code: Potassium-transporting ATPase ATP-binding subunit (681 aa).

4 helical membrane-spanning segments follow: residues 30–50, 59–79, 216–236, and 255–275; these read LLVY…FFGI, LAIA…EAIA, ILLV…LPFT, and IALL…SIGI. Catalysis depends on aspartate 306, which acts as the 4-aspartylphosphate intermediate. Residues aspartate 343, glutamate 347, 376 to 383, and lysine 394 each bind ATP; that span reads FTATTRMS. 2 residues coordinate Mg(2+): aspartate 517 and aspartate 521. Transmembrane regions (helical) follow at residues 587–607, 615–635, and 661–681; these read FAII…LNLM, AILS…PLSL, and LVAP…LGIV.

It belongs to the cation transport ATPase (P-type) (TC 3.A.3) family. Type IA subfamily. In terms of assembly, the system is composed of three essential subunits: KdpA, KdpB and KdpC.

It localises to the cell membrane. The enzyme catalyses K(+)(out) + ATP + H2O = K(+)(in) + ADP + phosphate + H(+). Its function is as follows. Part of the high-affinity ATP-driven potassium transport (or Kdp) system, which catalyzes the hydrolysis of ATP coupled with the electrogenic transport of potassium into the cytoplasm. This subunit is responsible for energy coupling to the transport system and for the release of the potassium ions to the cytoplasm. This Listeria welshimeri serovar 6b (strain ATCC 35897 / DSM 20650 / CCUG 15529 / CIP 8149 / NCTC 11857 / SLCC 5334 / V8) protein is Potassium-transporting ATPase ATP-binding subunit.